The primary structure comprises 686 residues: Cadmium, zinc and cobalt-transporting ATPase (686 aa).

The HMA domain maps to 1-62; the sequence is MQEYHIHNLD…FIKQNEPHLS (62 aa). Residues 1–72 lie on the Cytoplasmic side of the membrane; the sequence is MQEYHIHNLD…LSFKEATEKP (72 aa). Residues Cys-11 and Cys-14 each contribute to the Cd(2+) site. The Co(2+) site is built by Cys-11 and Cys-14. 2 residues coordinate Zn(2+): Cys-11 and Cys-14. A helical transmembrane segment spans residues 73-92; it reads LSFTPLIITIMVFLGAILIL. Residues 93–102 are Extracellular-facing; sequence HLNPSPLIEK. The chain crosses the membrane as a helical span at residues 103–124; the sequence is AMFFVLALVYLVSGKDVILGAF. The Cytoplasmic portion of the chain corresponds to 125–131; sequence RGLRKGQ. The helical transmembrane segment at 132–151 threads the bilayer; the sequence is FFDENALMLIATIAAFFVGA. Topologically, residues 152-154 are extracellular; the sequence is YEE. The chain crosses the membrane as a helical span at residues 155–174; that stretch reads SVSIMVFYSAGEFLQKLAVS. At 175–308 the chain is on the cytoplasmic side; it reads RSKKSLKALV…ITKFSRYYTP (134 aa). The chain crosses the membrane as a helical span at residues 309 to 327; that stretch reads SVLFIALMIAVLPPLFSMG. At 328–332 the chain is on the extracellular side; it reads SFDEW. The helical transmembrane segment at 333-350 threads the bilayer; it reads IYRGLVALMVSCPCALVI. Residues 351–635 lie on the Cytoplasmic side of the membrane; it reads SVPLGYFGGV…VLAIAKKTKS (285 aa). Residue Asp-388 is the 4-aspartylphosphate intermediate of the active site. Mg(2+) is bound by residues Asp-583 and Asp-587. Residues 636 to 657 form a helical membrane-spanning segment; it reads IIWQNILFALGIKAVFIVLGLM. Residues 658–665 lie on the Extracellular side of the membrane; it reads GVASLWEA. Residues 666 to 681 traverse the membrane as a helical segment; the sequence is VFGDVGVTLLALANSM. Over 682–686 the chain is Cytoplasmic; that stretch reads RAMRA.

It belongs to the cation transport ATPase (P-type) (TC 3.A.3) family. Type IB subfamily.

Its subcellular location is the cell membrane. It carries out the reaction Zn(2+)(in) + ATP + H2O = Zn(2+)(out) + ADP + phosphate + H(+). The enzyme catalyses Cd(2+)(in) + ATP + H2O = Cd(2+)(out) + ADP + phosphate + H(+). Functionally, couples the hydrolysis of ATP with the transport of cadmium, zinc and cobalt out of the cell. This ion efflux may influence the activity of urease, which is essential for the survival of the bacterium in the gastric environment. The protein is Cadmium, zinc and cobalt-transporting ATPase (cadA) of Helicobacter pylori (strain ATCC 700392 / 26695) (Campylobacter pylori).